Here is a 660-residue protein sequence, read N- to C-terminus: DNA polymerase alpha-associated DNA helicase A (660 aa).

ATP is bound at residue 232–239; the sequence is GPPGTGKT.

The protein belongs to the DNA2/NAM7 helicase family. As to quaternary structure, associates with the hexameric DNA polymerase alpha.

The protein localises to the cytoplasm. It is found in the nucleus. It catalyses the reaction ATP + H2O = ADP + phosphate + H(+). Its function is as follows. DNA polymerase alpha-associated DNA helicase which may be involved in DNA replication. The sequence is that of DNA polymerase alpha-associated DNA helicase A (hcs1) from Schizosaccharomyces pombe (strain 972 / ATCC 24843) (Fission yeast).